The chain runs to 188 residues: Adenine phosphoribosyltransferase (188 aa).

Belongs to the purine/pyrimidine phosphoribosyltransferase family. In terms of assembly, homodimer.

Its subcellular location is the cytoplasm. The catalysed reaction is AMP + diphosphate = 5-phospho-alpha-D-ribose 1-diphosphate + adenine. Its pathway is purine metabolism; AMP biosynthesis via salvage pathway; AMP from adenine: step 1/1. In terms of biological role, catalyzes a salvage reaction resulting in the formation of AMP, that is energically less costly than de novo synthesis. The polypeptide is Adenine phosphoribosyltransferase (Neisseria meningitidis serogroup B (strain ATCC BAA-335 / MC58)).